Here is a 623-residue protein sequence, read N- to C-terminus: Glutamine--fructose-6-phosphate aminotransferase [isomerizing] (623 aa).

Catalysis depends on Cys-2, which acts as the Nucleophile; for GATase activity. A Glutamine amidotransferase type-2 domain is found at Cys-2–Asp-228. SIS domains follow at residues Ile-295–Asn-435 and Leu-468–Pro-613. Lys-618 acts as the For Fru-6P isomerization activity in catalysis.

As to quaternary structure, homodimer.

It localises to the cytoplasm. The catalysed reaction is D-fructose 6-phosphate + L-glutamine = D-glucosamine 6-phosphate + L-glutamate. Functionally, catalyzes the first step in hexosamine metabolism, converting fructose-6P into glucosamine-6P using glutamine as a nitrogen source. The sequence is that of Glutamine--fructose-6-phosphate aminotransferase [isomerizing] from Corynebacterium glutamicum (strain ATCC 13032 / DSM 20300 / JCM 1318 / BCRC 11384 / CCUG 27702 / LMG 3730 / NBRC 12168 / NCIMB 10025 / NRRL B-2784 / 534).